Consider the following 260-residue polypeptide: 2-amino-3,7-dideoxy-D-threo-hept-6-ulosonate synthase 1 (260 aa).

The Proton acceptor role is filled by Asp-26. 1-deoxy-D-threo-hexo-2,5-diulose 6-phosphate contacts are provided by residues 26–30 (DHGIT) and 144–146 (YPR). Tyr-144 serves as the catalytic Proton donor. The active-site Schiff-base intermediate with substrate is the Lys-172. 1-deoxy-D-threo-hexo-2,5-diulose 6-phosphate is bound by residues 194 to 195 (GG) and 221 to 222 (GR).

The protein belongs to the DeoC/FbaB aldolase family. ADHS subfamily. In terms of assembly, homodecamer.

The catalysed reaction is 1-deoxy-D-threo-hexo-2,5-diulose 6-phosphate + L-aspartate 4-semialdehyde = 2,3-dioxopropyl phosphate + 2-amino-2,3,7-trideoxy-D-lyxo-hept-6-ulosonate. In terms of biological role, catalyzes a transaldol reaction between 6-deoxy-5-ketofructose 1-phosphate (DKFP) and L-aspartate semialdehyde (ASA) with an elimination of hydroxypyruvaldehyde phosphate to yield 2-amino-3,7-dideoxy-D-threo-hept-6-ulosonate (ADH). Plays a key role in an alternative pathway of the biosynthesis of 3-dehydroquinate (DHQ), which is involved in the canonical pathway for the biosynthesis of aromatic amino acids. In Archaeoglobus fulgidus (strain ATCC 49558 / DSM 4304 / JCM 9628 / NBRC 100126 / VC-16), this protein is 2-amino-3,7-dideoxy-D-threo-hept-6-ulosonate synthase 1.